Here is a 938-residue protein sequence, read N- to C-terminus: E3 ubiquitin-protein ligase CBL-B (938 aa).

The segment at proline 35 to glutamine 167 is 4H. The region spanning proline 35 to glycine 343 is the Cbl-PTB domain. Positions glycine 168–phenylalanine 240 are EF-hand-like. Residues aspartate 221, threonine 223, asparagine 225, tyrosine 227, and glutamate 232 each contribute to the Ca(2+) site. The tract at residues glutamine 241–glycine 343 is SH2-like. Serine 282 is subject to Phosphoserine; by PKC/PRKCQ. Position 286 (arginine 286) interacts with 4-O-phospho-L-tyrosine. A linker region spans residues leucine 344–leucine 372. Tyrosine 363 is modified (phosphotyrosine). Residues cysteine 373–arginine 412 form an RING-type zinc finger. The disordered stretch occupies residues alanine 465–proline 588. Positions arginine 473–leucine 486 are enriched in polar residues. A phosphoserine mark is found at serine 476, serine 480, serine 484, serine 521, serine 525, and serine 529. Positions proline 543 to aspartate 567 are interaction with VAV1. The segment covering leucine 544 to proline 566 has biased composition (pro residues). Serine 633 bears the Phosphoserine mark. Residues tyrosine 664 and tyrosine 708 each carry the phosphotyrosine modification. Disordered stretches follow at residues glutamate 702–cysteine 725 and aspartate 771–leucine 885. The segment covering histidine 714–histidine 724 has biased composition (polar residues). A compositionally biased stretch (pro residues) spans proline 775–alanine 784. Over residues proline 794–glycine 804 the composition is skewed to low complexity. Residues asparagine 839 to serine 855 show a composition bias toward polar residues. Residue tyrosine 845 is modified to Phosphotyrosine. The segment at glutamine 847–alanine 883 is interaction with SH3KBP1. The segment covering proline 862–proline 878 has biased composition (basic residues). Residues asparagine 887–phenylalanine 926 form the UBA domain.

Interacts with SH3 domain-containing proteins LCK, CRK and SORBS1. Interacts with LCP2 and ZAP70. Interacts with CBL. Interacts with SH3 domain-containing proteins VAV1, FYN, FGR, PLCG1, GRB2, CRKL, PIK3R1 and SH3KBP1/CIN85. Identified in heterotrimeric complexes with SH3KBP1/CIN85, CD2AP and ARHGEF7, where one CBLB peptide binds two copies of the other protein. Interacts with poly-ubiquitinated proteins. Dimerization is required for the binding of poly-ubiquitin, but not for the binding of mono-ubiquitin. Interacts with EGFR (phosphorylated). Interacts with IFT20. Phosphorylated on tyrosine and serine residues upon TCR or BCR activation, and upon various types of cell stimulation. Post-translationally, auto-ubiquitinated upon EGF-mediated cell activation or upon T-cell costimulation by CD28; which promotes proteasomal degradation.

The protein localises to the cytoplasm. It carries out the reaction S-ubiquitinyl-[E2 ubiquitin-conjugating enzyme]-L-cysteine + [acceptor protein]-L-lysine = [E2 ubiquitin-conjugating enzyme]-L-cysteine + N(6)-ubiquitinyl-[acceptor protein]-L-lysine.. It functions in the pathway protein modification; protein ubiquitination. Its function is as follows. E3 ubiquitin-protein ligase which accepts ubiquitin from specific E2 ubiquitin-conjugating enzymes, and transfers it to substrates, generally promoting their degradation by the proteasome. Negatively regulates TCR (T-cell receptor), BCR (B-cell receptor) and FCER1 (high affinity immunoglobulin epsilon receptor) signal transduction pathways. In naive T-cells, inhibits VAV1 activation upon TCR engagement and imposes a requirement for CD28 costimulation for proliferation and IL-2 production. Also acts by promoting PIK3R1/p85 ubiquitination, which impairs its recruitment to the TCR and subsequent activation. In activated T-cells, inhibits PLCG1 activation and calcium mobilization upon restimulation and promotes anergy. In B-cells, acts by ubiquitinating SYK and promoting its proteasomal degradation. Slightly promotes SRC ubiquitination. May be involved in EGFR ubiquitination and internalization. May be functionally coupled with the E2 ubiquitin-protein ligase UB2D3. In association with CBL, required for proper feedback inhibition of ciliary platelet-derived growth factor receptor-alpha (PDGFRA) signaling pathway via ubiquitination and internalization of PDGFRA. The protein is E3 ubiquitin-protein ligase CBL-B (Cblb) of Rattus norvegicus (Rat).